The chain runs to 380 residues: Cytochrome b (380 aa).

4 consecutive transmembrane segments (helical) span residues 33 to 53 (FGSL…FLAM), 77 to 98 (WLIR…YLHI), 113 to 133 (WNVG…GYVL), and 178 to 198 (FFAF…IHLL). 2 residues coordinate heme b: histidine 83 and histidine 97. Residues histidine 182 and histidine 196 each contribute to the heme b site. Residue histidine 201 participates in a ubiquinone binding. 4 helical membrane-spanning segments follow: residues 226–246 (YKDL…ALFS), 288–308 (LGGV…PALH), 320–340 (ITQL…WIGG), and 347–367 (FIII…TLIP).

Belongs to the cytochrome b family. The cytochrome bc1 complex contains 3 respiratory subunits (MT-CYB, CYC1 and UQCRFS1), 2 core proteins (UQCRC1 and UQCRC2) and probably 6 low-molecular weight proteins. Requires heme b as cofactor.

The protein resides in the mitochondrion inner membrane. Functionally, component of the ubiquinol-cytochrome c reductase complex (complex III or cytochrome b-c1 complex) that is part of the mitochondrial respiratory chain. The b-c1 complex mediates electron transfer from ubiquinol to cytochrome c. Contributes to the generation of a proton gradient across the mitochondrial membrane that is then used for ATP synthesis. In Percopsis transmontana (Sand roller), this protein is Cytochrome b (mt-cyb).